We begin with the raw amino-acid sequence, 480 residues long: Serine/threonine-protein kinase WAG2 (480 aa).

A Protein kinase domain is found at 88 to 396; the sequence is LKLIRHLGTG…AQDIKRHPFF (309 aa). ATP-binding positions include 94–102 and Lys-117; that span reads LGTGNLGRV. Catalysis depends on Asp-213, which acts as the Proton acceptor.

Belongs to the protein kinase superfamily. Ser/Thr protein kinase family. Expressed in root tips, lateral root primordia and emerging true leaf primordia.

Its subcellular location is the cytoplasm. It localises to the cytosol. It catalyses the reaction L-seryl-[protein] + ATP = O-phospho-L-seryl-[protein] + ADP + H(+). The enzyme catalyses L-threonyl-[protein] + ATP = O-phospho-L-threonyl-[protein] + ADP + H(+). In terms of biological role, serine/threonine-protein kinase involved in the regulation of auxin signaling. Acts as a positive regulator of cellular auxin efflux and regulates organ development by enhancing PIN-mediated polar auxin transport. Phosphorylates conserved serine residues in the PIN auxin efflux carriers. Phosphorylation of PIN proteins is required and sufficient for apical-basal PIN polarity that enables directional intercellular auxin fluxes, which mediate differential growth, tissue patterning and organogenesis. Acts as a suppressor of root waving. The sequence is that of Serine/threonine-protein kinase WAG2 (WAG2) from Arabidopsis thaliana (Mouse-ear cress).